Consider the following 100-residue polypeptide: Urease subunit gamma (100 aa).

This sequence belongs to the urease gamma subunit family. Heterotrimer of UreA (gamma), UreB (beta) and UreC (alpha) subunits. Three heterotrimers associate to form the active enzyme.

The protein localises to the cytoplasm. It carries out the reaction urea + 2 H2O + H(+) = hydrogencarbonate + 2 NH4(+). Its pathway is nitrogen metabolism; urea degradation; CO(2) and NH(3) from urea (urease route): step 1/1. This Streptomyces avermitilis (strain ATCC 31267 / DSM 46492 / JCM 5070 / NBRC 14893 / NCIMB 12804 / NRRL 8165 / MA-4680) protein is Urease subunit gamma.